Reading from the N-terminus, the 206-residue chain is Thymidylate kinase (206 aa).

Position 7–14 (7–14 (GGEGSGKS)) interacts with ATP.

It belongs to the thymidylate kinase family.

The enzyme catalyses dTMP + ATP = dTDP + ADP. Phosphorylation of dTMP to form dTDP in both de novo and salvage pathways of dTTP synthesis. The polypeptide is Thymidylate kinase (tmk) (Chlamydia pneumoniae (Chlamydophila pneumoniae)).